The following is a 56-amino-acid chain: Large ribosomal subunit protein bL33 (56 aa).

It belongs to the bacterial ribosomal protein bL33 family.

This is Large ribosomal subunit protein bL33 from Vibrio vulnificus (strain YJ016).